A 473-amino-acid polypeptide reads, in one-letter code: Arginine biosynthesis bifunctional protein ArgJ, mitochondrial (473 aa).

Substrate is bound by residues Thr201, Lys230, Thr241, Glu328, Asn468, and Thr473. Thr241 (nucleophile) is an active-site residue.

It belongs to the ArgJ family. Heterodimer of an alpha and a beta chain. The alpha and beta chains are autoproteolytically processed from a single precursor protein within the mitochondrion.

It is found in the mitochondrion matrix. The enzyme catalyses N(2)-acetyl-L-ornithine + L-glutamate = N-acetyl-L-glutamate + L-ornithine. It catalyses the reaction L-glutamate + acetyl-CoA = N-acetyl-L-glutamate + CoA + H(+). It participates in amino-acid biosynthesis; L-arginine biosynthesis; L-ornithine and N-acetyl-L-glutamate from L-glutamate and N(2)-acetyl-L-ornithine (cyclic): step 1/1. The protein operates within amino-acid biosynthesis; L-arginine biosynthesis; N(2)-acetyl-L-ornithine from L-glutamate: step 1/4. Functionally, catalyzes two activities which are involved in the cyclic version of arginine biosynthesis: the synthesis of acetylglutamate from glutamate and acetyl-CoA, and of ornithine by transacetylation between acetylornithine and glutamate. This is Arginine biosynthesis bifunctional protein ArgJ, mitochondrial from Ajellomyces capsulatus (strain G186AR / H82 / ATCC MYA-2454 / RMSCC 2432) (Darling's disease fungus).